The primary structure comprises 449 residues: Glutamyl-tRNA reductase (449 aa).

Substrate-binding positions include 58–61 (TCNR), Ser121, 126–128 (ETQ), and Gln132. Cys59 functions as the Nucleophile in the catalytic mechanism. 203–208 (GLGEMA) serves as a coordination point for NADP(+).

The protein belongs to the glutamyl-tRNA reductase family. Homodimer.

The enzyme catalyses (S)-4-amino-5-oxopentanoate + tRNA(Glu) + NADP(+) = L-glutamyl-tRNA(Glu) + NADPH + H(+). It functions in the pathway porphyrin-containing compound metabolism; protoporphyrin-IX biosynthesis; 5-aminolevulinate from L-glutamyl-tRNA(Glu): step 1/2. In terms of biological role, catalyzes the NADPH-dependent reduction of glutamyl-tRNA(Glu) to glutamate 1-semialdehyde (GSA). This is Glutamyl-tRNA reductase from Helicobacter pylori (strain P12).